The chain runs to 228 residues: Urease accessory protein UreF (228 aa).

Belongs to the UreF family. UreD, UreF and UreG form a complex that acts as a GTP-hydrolysis-dependent molecular chaperone, activating the urease apoprotein by helping to assemble the nickel containing metallocenter of UreC. The UreE protein probably delivers the nickel.

It is found in the cytoplasm. Required for maturation of urease via the functional incorporation of the urease nickel metallocenter. The sequence is that of Urease accessory protein UreF from Prochlorococcus marinus (strain MIT 9312).